The sequence spans 130 residues: Small ribosomal subunit protein uS9 (130 aa).

It belongs to the universal ribosomal protein uS9 family.

In Photorhabdus laumondii subsp. laumondii (strain DSM 15139 / CIP 105565 / TT01) (Photorhabdus luminescens subsp. laumondii), this protein is Small ribosomal subunit protein uS9.